A 504-amino-acid chain; its full sequence is D-alanine--D-alanyl carrier protein ligase (504 aa).

152-153 (TS) contributes to the ATP binding site. A D-alanine-binding site is contributed by aspartate 197. 292–297 (NTYGPT) provides a ligand contact to ATP. Valine 301 contacts D-alanine. ATP is bound by residues aspartate 383, 394–397 (YNGR), and lysine 492. Lysine 492 serves as a coordination point for D-alanine.

The protein belongs to the ATP-dependent AMP-binding enzyme family. DltA subfamily.

Its subcellular location is the cytoplasm. The enzyme catalyses holo-[D-alanyl-carrier protein] + D-alanine + ATP = D-alanyl-[D-alanyl-carrier protein] + AMP + diphosphate. Its pathway is cell wall biogenesis; lipoteichoic acid biosynthesis. Functionally, catalyzes the first step in the D-alanylation of lipoteichoic acid (LTA), the activation of D-alanine and its transfer onto the D-alanyl carrier protein (Dcp) DltC. In an ATP-dependent two-step reaction, forms a high energy D-alanyl-AMP intermediate, followed by transfer of the D-alanyl residue as a thiol ester to the phosphopantheinyl prosthetic group of the Dcp. D-alanylation of LTA plays an important role in modulating the properties of the cell wall in Gram-positive bacteria, influencing the net charge of the cell wall. The chain is D-alanine--D-alanyl carrier protein ligase from Bacillus cereus (strain ATCC 10987 / NRS 248).